Reading from the N-terminus, the 431-residue chain is Serine hydroxymethyltransferase 2 (431 aa).

(6S)-5,6,7,8-tetrahydrofolate-binding positions include L131 and 135–137 (GHL). Position 240 is an N6-(pyridoxal phosphate)lysine (K240). E256 serves as a coordination point for (6S)-5,6,7,8-tetrahydrofolate.

The protein belongs to the SHMT family. In terms of assembly, homodimer. Pyridoxal 5'-phosphate is required as a cofactor.

The protein resides in the cytoplasm. It carries out the reaction (6R)-5,10-methylene-5,6,7,8-tetrahydrofolate + glycine + H2O = (6S)-5,6,7,8-tetrahydrofolate + L-serine. It participates in one-carbon metabolism; tetrahydrofolate interconversion. The protein operates within amino-acid biosynthesis; glycine biosynthesis; glycine from L-serine: step 1/1. In terms of biological role, catalyzes the reversible interconversion of serine and glycine with tetrahydrofolate (THF) serving as the one-carbon carrier. This reaction serves as the major source of one-carbon groups required for the biosynthesis of purines, thymidylate, methionine, and other important biomolecules. Also exhibits THF-independent aldolase activity toward beta-hydroxyamino acids, producing glycine and aldehydes, via a retro-aldol mechanism. This chain is Serine hydroxymethyltransferase 2, found in Vibrio vulnificus (strain CMCP6).